We begin with the raw amino-acid sequence, 648 residues long: Probable alpha-galactosidase D (648 aa).

An N-terminal signal peptide occupies residues 1–16 (MEFIVSLLLLSPALVA). N-linked (GlcNAc...) asparagine glycosylation is found at Asn84 and Asn90. The cysteines at positions 123 and 156 are disulfide-linked. Catalysis depends on Asp154, which acts as the Nucleophile. A substrate-binding site is contributed by 199–203 (EWGID). Asp221 acts as the Proton donor in catalysis. N-linked (GlcNAc...) asparagine glycans are attached at residues Asn339, Asn350, Asn505, and Asn572.

It belongs to the glycosyl hydrolase 27 family.

It is found in the secreted. The catalysed reaction is Hydrolysis of terminal, non-reducing alpha-D-galactose residues in alpha-D-galactosides, including galactose oligosaccharides, galactomannans and galactolipids.. In terms of biological role, hydrolyzes a variety of simple alpha-D-galactoside as well as more complex molecules such as oligosaccharides and polysaccharides. In Aspergillus fumigatus (strain CBS 144.89 / FGSC A1163 / CEA10) (Neosartorya fumigata), this protein is Probable alpha-galactosidase D (aglD).